A 92-amino-acid chain; its full sequence is 10 kDa late embryogenesis abundant protein (92 aa).

Residues 1–10 (MASQQGQQTR) are compositionally biased toward polar residues. Residues 1–92 (MASQQGQQTR…GEREEEEEED (92 aa)) are disordered. Composition is skewed to basic and acidic residues over residues 11–26 (KIPEQEKKDLDQRAAK) and 38–71 (KSLEAQERLAEGRSKGGQTRKDQLGTEGYKEMGK).

This sequence belongs to the small hydrophilic plant seed protein family. As to expression, maximally expressed in dry seeds. Also present in mid-maturation embryos.

LEA proteins are late embryonic proteins abundant in higher plant seed embryos. They may play an essential role in seed survival and in controlling water exchanges during seed desiccation and imbibition. The polypeptide is 10 kDa late embryogenesis abundant protein (Helianthus annuus (Common sunflower)).